The sequence spans 65 residues: UPF0291 protein BBR47_33060 (65 aa).

The protein belongs to the UPF0291 family.

It is found in the cytoplasm. This Brevibacillus brevis (strain 47 / JCM 6285 / NBRC 100599) protein is UPF0291 protein BBR47_33060.